We begin with the raw amino-acid sequence, 62 residues long: Bacteriocin pediocin PA-1 (62 aa).

Residues 1–18 (MKKIEKLTEKEMANIIGG) constitute a propeptide that is removed on maturation. 2 cysteine pairs are disulfide-bonded: cysteine 27/cysteine 32 and cysteine 42/cysteine 62. The segment at 40 to 52 (TTCIINNGAMAWA) is hydrophobic.

The protein belongs to the bacteriocin class IIA/YGNGV family.

The protein resides in the secreted. Functionally, bactericidal activity (effective inhibitor of L.monocytogenes). The polypeptide is Bacteriocin pediocin PA-1 (pedA) (Pediococcus acidilactici).